Reading from the N-terminus, the 118-residue chain is Ribonuclease P protein component (118 aa).

It belongs to the RnpA family. As to quaternary structure, consists of a catalytic RNA component (M1 or rnpB) and a protein subunit.

It catalyses the reaction Endonucleolytic cleavage of RNA, removing 5'-extranucleotides from tRNA precursor.. RNaseP catalyzes the removal of the 5'-leader sequence from pre-tRNA to produce the mature 5'-terminus. It can also cleave other RNA substrates such as 4.5S RNA. The protein component plays an auxiliary but essential role in vivo by binding to the 5'-leader sequence and broadening the substrate specificity of the ribozyme. The protein is Ribonuclease P protein component of Rickettsia conorii (strain ATCC VR-613 / Malish 7).